Consider the following 147-residue polypeptide: Small ribosomal subunit protein uS5 (147 aa).

In terms of domain architecture, S5 DRBM spans 9–72 (FQEVVVNIGR…DDAFKNLIHV (64 aa)).

The protein belongs to the universal ribosomal protein uS5 family. In terms of assembly, part of the 30S ribosomal subunit. Contacts proteins S4 and S8.

Its function is as follows. With S4 and S12 plays an important role in translational accuracy. Located at the back of the 30S subunit body where it stabilizes the conformation of the head with respect to the body. In Helicobacter pylori (strain J99 / ATCC 700824) (Campylobacter pylori J99), this protein is Small ribosomal subunit protein uS5.